The sequence spans 236 residues: Uridylate kinase (236 aa).

Position 12-15 (12-15 (KISG)) interacts with ATP. An involved in allosteric activation by GTP region spans residues 20 to 25 (GKKGFG). Residue Gly54 coordinates UMP. Residues Gly55 and Arg59 each contribute to the ATP site. UMP-binding positions include Asp72 and 133–140 (TGNPYFST). Positions 166 and 169 each coordinate ATP.

It belongs to the UMP kinase family. In terms of assembly, homohexamer.

The protein resides in the cytoplasm. The enzyme catalyses UMP + ATP = UDP + ADP. The protein operates within pyrimidine metabolism; CTP biosynthesis via de novo pathway; UDP from UMP (UMPK route): step 1/1. Its activity is regulated as follows. Allosterically activated by GTP. Inhibited by UTP. Functionally, catalyzes the reversible phosphorylation of UMP to UDP. The polypeptide is Uridylate kinase (Clostridium novyi (strain NT)).